Here is a 394-residue protein sequence, read N- to C-terminus: Elongation factor Tu 2 (394 aa).

Positions 10–204 (KPHVNVGTIG…ALDSYIPQPE (195 aa)) constitute a tr-type G domain. Residues 19–26 (GHVDHGKT) are G1. 19–26 (GHVDHGKT) contributes to the GTP binding site. T26 serves as a coordination point for Mg(2+). The tract at residues 60–64 (GITIN) is G2. The tract at residues 81 to 84 (DCPG) is G3. GTP contacts are provided by residues 81–85 (DCPGH) and 136–139 (NKCD). Positions 136 to 139 (NKCD) are G4. The interval 174 to 176 (SAL) is G5.

It belongs to the TRAFAC class translation factor GTPase superfamily. Classic translation factor GTPase family. EF-Tu/EF-1A subfamily. In terms of assembly, monomer.

It localises to the cytoplasm. It catalyses the reaction GTP + H2O = GDP + phosphate + H(+). Functionally, GTP hydrolase that promotes the GTP-dependent binding of aminoacyl-tRNA to the A-site of ribosomes during protein biosynthesis. This Yersinia pestis bv. Antiqua (strain Antiqua) protein is Elongation factor Tu 2.